Here is a 454-residue protein sequence, read N- to C-terminus: tRNA-2-methylthio-N(6)-dimethylallyladenosine synthase (454 aa).

The region spanning 6–122 is the MTTase N-terminal domain; that stretch reads RHYHITTFGC…LKDLLESVFD (117 aa). Positions 15, 51, 85, 157, 161, and 164 each coordinate [4Fe-4S] cluster. A Radical SAM core domain is found at 143 to 381; it reads RDSKVTAWVN…HLGNLKVAER (239 aa). Residues 383–447 enclose the TRAM domain; the sequence is QRYFGRIEEV…PFSLTGQPVE (65 aa).

The protein belongs to the methylthiotransferase family. MiaB subfamily. As to quaternary structure, monomer. [4Fe-4S] cluster is required as a cofactor.

The protein resides in the cytoplasm. The enzyme catalyses N(6)-dimethylallyladenosine(37) in tRNA + (sulfur carrier)-SH + AH2 + 2 S-adenosyl-L-methionine = 2-methylsulfanyl-N(6)-dimethylallyladenosine(37) in tRNA + (sulfur carrier)-H + 5'-deoxyadenosine + L-methionine + A + S-adenosyl-L-homocysteine + 2 H(+). Its function is as follows. Catalyzes the methylthiolation of N6-(dimethylallyl)adenosine (i(6)A), leading to the formation of 2-methylthio-N6-(dimethylallyl)adenosine (ms(2)i(6)A) at position 37 in tRNAs that read codons beginning with uridine. In Nostoc punctiforme (strain ATCC 29133 / PCC 73102), this protein is tRNA-2-methylthio-N(6)-dimethylallyladenosine synthase.